The chain runs to 248 residues: Isopentenyl phosphate kinase (248 aa).

An ATP-binding site is contributed by 7 to 11; it reads KLGGS. Residue glycine 49 coordinates substrate. Glycine 50 lines the ATP pocket. 2 residues coordinate substrate: histidine 54 and glycine 152. ATP contacts are provided by glycine 209 and lysine 213.

It belongs to the isopentenyl phosphate kinase family. In terms of assembly, homodimer.

The catalysed reaction is isopentenyl phosphate + ATP = isopentenyl diphosphate + ADP. Catalyzes the phosphorylation of isopentenyl phosphate (IP) to isopentenyl diphosphate (IPP). Functions in an alternate mevalonate (MVA) pathway leading to IPP, a key precursor for the biosynthesis of isoprenoid compounds such as archaeal membrane lipids. The protein is Isopentenyl phosphate kinase of Haloferax volcanii (strain ATCC 29605 / DSM 3757 / JCM 8879 / NBRC 14742 / NCIMB 2012 / VKM B-1768 / DS2) (Halobacterium volcanii).